A 385-amino-acid polypeptide reads, in one-letter code: MSKCPRCFTALNPNQYLWTLPEQSGGTRYRDEVATAYSGAPADCGPLYTWSRSPGYNGPPPPTSEATRALQAPAVEICPVCHFTLPEGWREGHAICIALAGARATGKSLYIAVLVKQLELLCERFGVSMQPVTRGTAQAYATNYETPLYVQRGLIPPTPTVRTQTSDHREPLMFSLGIWHGVRRFLVLRDVAGEDMESGDLHAPPFRFFAHADAVFFMFDPLRVKTIRDQLHDLLPAQVVSGGDPRTVLTNVLTAVSPGQPKLAVILSKFDVLRALRDVEGSEWGLIMSNGGAAYLRDTSDGQQYDETDGQLLHEEVRSLLLRLHGGSILAAVENPATGVRLQSRNFVVSALGHPPSGNRLHARGIAPFRCVDPIRWVTSGFGVL.

It localises to the cytoplasm. May be involved in assembly of the ESX-1 / type VII specialized secretion system (T7SS), which exports several proteins including EsxA and EsxB. Involved in DNA conjugation in recipient (MKD8) strain. The protein is Putative ESX-1 scaffolding and assembly protein SaeC of Mycolicibacterium smegmatis (strain ATCC 700084 / mc(2)155) (Mycobacterium smegmatis).